The primary structure comprises 176 residues: Ribosome maturation factor RimM (176 aa).

The region spanning 96–176 (PADEFYWRDL…QILVDWDPDF (81 aa)) is the PRC barrel domain.

The protein belongs to the RimM family. Binds ribosomal protein uS19.

The protein localises to the cytoplasm. Its function is as follows. An accessory protein needed during the final step in the assembly of 30S ribosomal subunit, possibly for assembly of the head region. Essential for efficient processing of 16S rRNA. May be needed both before and after RbfA during the maturation of 16S rRNA. It has affinity for free ribosomal 30S subunits but not for 70S ribosomes. The protein is Ribosome maturation factor RimM of Shewanella baltica (strain OS223).